The primary structure comprises 310 residues: Thioredoxin reductase (310 aa).

34–41 (NGMQPGGQ) lines the FAD pocket. Cys135 and Cys138 are joined by a disulfide. 281-290 (DVQDKIYRQA) is an FAD binding site.

The protein belongs to the class-II pyridine nucleotide-disulfide oxidoreductase family. Homodimer. FAD is required as a cofactor.

The protein localises to the cytoplasm. The catalysed reaction is [thioredoxin]-dithiol + NADP(+) = [thioredoxin]-disulfide + NADPH + H(+). The protein is Thioredoxin reductase (trxB) of Rickettsia typhi (strain ATCC VR-144 / Wilmington).